The primary structure comprises 262 residues: Acyl-[acyl-carrier-protein]--UDP-N-acetylglucosamine O-acyltransferase (262 aa).

Belongs to the transferase hexapeptide repeat family. LpxA subfamily. As to quaternary structure, homotrimer.

Its subcellular location is the cytoplasm. The catalysed reaction is a (3R)-hydroxyacyl-[ACP] + UDP-N-acetyl-alpha-D-glucosamine = a UDP-3-O-[(3R)-3-hydroxyacyl]-N-acetyl-alpha-D-glucosamine + holo-[ACP]. Its pathway is glycolipid biosynthesis; lipid IV(A) biosynthesis; lipid IV(A) from (3R)-3-hydroxytetradecanoyl-[acyl-carrier-protein] and UDP-N-acetyl-alpha-D-glucosamine: step 1/6. In terms of biological role, involved in the biosynthesis of lipid A, a phosphorylated glycolipid that anchors the lipopolysaccharide to the outer membrane of the cell. This is Acyl-[acyl-carrier-protein]--UDP-N-acetylglucosamine O-acyltransferase from Enterobacter sp. (strain 638).